Reading from the N-terminus, the 98-residue chain is Keratin-associated protein 3-1 (98 aa).

Ala2 carries the N-acetylalanine modification. 4 consecutive repeat copies span residues 3 to 7 (CCAPR), 8 to 12 (CCSVR), 47 to 51 (FCDNS), and 55 to 59 (YHVPD). A 4 X 5 AA repeats of C-C-X(3) region spans residues 3–59 (CCAPRCCSVRTGPATTICSSDQFCRCGVCLPSTCPHDISLLQPTFCDNSPVPYHVPD).

Belongs to the KRTAP type 3 family. Interacts with wool keratins. Wool.

Its function is as follows. In the wool cortex, wool keratin intermediate filaments are embedded in an interfilamentous matrix, consisting of hair keratin-associated proteins (KRTAP), which are essential for the formation of a rigid and resistant wool shaft through their extensive disulfide bond cross-linking with abundant cysteine residues of wool keratins. The matrix proteins include the high-sulfur and high-glycine-tyrosine keratins. The sequence is that of Keratin-associated protein 3-1 (KRTAP3-1) from Capra hircus (Goat).